The primary structure comprises 345 residues: Putative membrane protein ORF59 (345 aa).

The next 4 membrane-spanning stretches (helical) occupy residues 46–63 (LVFA…MMLI), 101–118 (IVFV…LVFL), 147–165 (IFGI…FSIL), and 265–286 (VVPV…WMVI).

It is found in the membrane. This chain is Putative membrane protein ORF59 (ORF59), found in Ictalurid herpesvirus 1 (strain Auburn) (IcHV-1).